A 388-amino-acid chain; its full sequence is Phosphopentomutase (388 aa).

Mn(2+)-binding residues include Asp-10, Asp-282, His-287, Asp-323, His-324, and His-335.

It belongs to the phosphopentomutase family. The cofactor is Mn(2+).

It is found in the cytoplasm. It carries out the reaction 2-deoxy-alpha-D-ribose 1-phosphate = 2-deoxy-D-ribose 5-phosphate. It catalyses the reaction alpha-D-ribose 1-phosphate = D-ribose 5-phosphate. Its pathway is carbohydrate degradation; 2-deoxy-D-ribose 1-phosphate degradation; D-glyceraldehyde 3-phosphate and acetaldehyde from 2-deoxy-alpha-D-ribose 1-phosphate: step 1/2. Functionally, isomerase that catalyzes the conversion of deoxy-ribose 1-phosphate (dRib-1-P) and ribose 1-phosphate (Rib-1-P) to deoxy-ribose 5-phosphate (dRib-5-P) and ribose 5-phosphate (Rib-5-P), respectively. In Carboxydothermus hydrogenoformans (strain ATCC BAA-161 / DSM 6008 / Z-2901), this protein is Phosphopentomutase.